A 396-amino-acid polypeptide reads, in one-letter code: Phosphoglycerate kinase (396 aa).

Residues 22–24, Arg-37, 60–63, Arg-118, and Arg-151 each bind substrate; these read DLN and HFGR. Residues Lys-201, Glu-323, and 353–356 contribute to the ATP site; that span reads GGDT.

This sequence belongs to the phosphoglycerate kinase family. As to quaternary structure, monomer.

The protein localises to the cytoplasm. The catalysed reaction is (2R)-3-phosphoglycerate + ATP = (2R)-3-phospho-glyceroyl phosphate + ADP. It participates in carbohydrate degradation; glycolysis; pyruvate from D-glyceraldehyde 3-phosphate: step 2/5. This Azorhizobium caulinodans (strain ATCC 43989 / DSM 5975 / JCM 20966 / LMG 6465 / NBRC 14845 / NCIMB 13405 / ORS 571) protein is Phosphoglycerate kinase.